The chain runs to 303 residues: Glutathione transport system permease protein GsiD (303 aa).

Transmembrane regions (helical) follow at residues 40 to 60, 105 to 125, 144 to 164, 165 to 185, 222 to 242, and 266 to 286; these read AMTAALFVILLIVVAIFARWI, LAAGVFAVFIGAAIGTLLGLL, LFAFPGILLAIAVVAVLGSGI, ANVIIAVAIFSIPAFARLVRG, IVVFFTMRIGTSIISAASLSF, and VIAPHVAVFPVLAIFLTVLAF. Positions 101–290 constitute an ABC transmembrane type-1 domain; the sequence is AQISLAAGVF…LTVLAFNLLG (190 aa).

Belongs to the binding-protein-dependent transport system permease family. In terms of assembly, the complex is composed of two ATP-binding proteins (GsiA), two transmembrane proteins (GsiC and GsiD) and a solute-binding protein (GsiB).

It is found in the cell inner membrane. Its function is as follows. Part of the ABC transporter complex GsiABCD involved in glutathione import. Probably responsible for the translocation of the substrate across the membrane. This Shigella dysenteriae serotype 1 (strain Sd197) protein is Glutathione transport system permease protein GsiD.